A 572-amino-acid chain; its full sequence is Terminal nucleotidyltransferase 4B (572 aa).

The tract at residues 1–105 is disordered; it reads MYRSGERLLG…ADGGGVVYSG (105 aa). Residues 25–34 show a composition bias toward polar residues; sequence ETTNNNNNHH. Residues 36–76 show a composition bias toward low complexity; the sequence is PGAWARRAGSSASSPPSASSSPHPSAAVPAADPADSASGSS. Residues 89 to 102 are compositionally biased toward gly residues; that stretch reads RAAGGGRADGGGVV. Val151 is covalently cross-linked (Glycyl lysine isopeptide (Lys-Gly) (interchain with G-Cter in SUMO2)). Residues Asp177 and Asp179 each coordinate Mg(2+). Residues Gly240, Lys265, Ser283, Tyr284, Asn368, and Arg372 each contribute to the ATP site. The PAP-associated domain occupies 308–368; the sequence is NYGVLLIEFF…YIEDPLQPGN (61 aa). Residues 435 to 572 form a disordered region; it reads KNRPEPSCNG…RDAPLSDLCR (138 aa). Positions 446–464 are enriched in low complexity; it reads VSSSSATQSSSSDVDSDAT. Residue Lys470 forms a Glycyl lysine isopeptide (Lys-Gly) (interchain with G-Cter in SUMO2) linkage. The span at 477-494 shows a compositional bias: polar residues; that stretch reads STGNRVGSQDVSLESSQA. The residue at position 484 (Ser484) is a Phosphoserine. Glycyl lysine isopeptide (Lys-Gly) (interchain with G-Cter in SUMO2) cross-links involve residues Lys497, Lys512, and Lys526. Low complexity predominate over residues 499-514; that stretch reads QSTQTTNTSNSTNKSQ. Residues 522–553 are compositionally biased toward polar residues; sequence RSSSKGFQGTTQTSHGSLMTNKQHQGKSNNQY. A Basic, involved in binding of the RNA primer motif is present at residues 557-563; that stretch reads KKRKHKR.

Belongs to the DNA polymerase type-B-like family. In terms of assembly, component of a nucleolar TRAMP-like complex, an ATP-dependent exosome regulatory complex consisting of a helicase (MTREX), an oligadenylate polymerase (TENT4B or TENT4A), and a substrate specific RNA-binding factor (ZCCHC7 or ZCCHC8). Several TRAMP-like complexes exist with specific compositions and are associated with nuclear, or nucleolar RNA exosomes. Interacts with CPEB1; the interaction is required for TENT4B-mediated translational control. It depends on Mg(2+) as a cofactor. Mn(2+) serves as cofactor.

It is found in the nucleus. It localises to the nucleolus. The protein resides in the cytoplasm. It catalyses the reaction RNA(n) + ATP = RNA(n)-3'-adenine ribonucleotide + diphosphate. Terminal nucleotidyltransferase that catalyzes preferentially the transfer of ATP and GTP on RNA 3' poly(A) tail creating a heterogeneous 3' poly(A) tail leading to mRNAs stabilization by protecting mRNAs from active deadenylation. Also functions as a catalytic subunit of a TRAMP-like complex which has a poly(A) RNA polymerase activity and is involved in a post-transcriptional quality control mechanism. Polyadenylation with short oligo(A) tails is required for the degradative activity of the exosome on several of its nuclear RNA substrates. Doesn't need a cofactor for polyadenylation activity (in vitro). Required for cytoplasmic polyadenylation of mRNAs involved in carbohydrate metabolism, including the glucose transporter SLC2A1/GLUT1. Plays a role in replication-dependent histone mRNA degradation, probably through terminal uridylation of mature histone mRNAs. May play a role in sister chromatid cohesion. Mediates 3' adenylation of the microRNA MIR21 followed by its 3'-to-5' trimming by the exoribonuclease PARN leading to degradation. Mediates 3' adenylation of H/ACA box snoRNAs (small nucleolar RNAs) followed by its 3'-to-5' trimming by the exoribonuclease PARN which enhances snoRNA stability and maturation. The chain is Terminal nucleotidyltransferase 4B from Homo sapiens (Human).